The chain runs to 122 residues: Large ribosomal subunit protein uL14 (122 aa).

This sequence belongs to the universal ribosomal protein uL14 family. Part of the 50S ribosomal subunit. Forms a cluster with proteins L3 and L19. In the 70S ribosome, L14 and L19 interact and together make contacts with the 16S rRNA in bridges B5 and B8.

Functionally, binds to 23S rRNA. Forms part of two intersubunit bridges in the 70S ribosome. In Pediococcus pentosaceus (strain ATCC 25745 / CCUG 21536 / LMG 10740 / 183-1w), this protein is Large ribosomal subunit protein uL14.